The following is a 387-amino-acid chain: 3-ketoacyl-CoA thiolase (387 aa).

Cys-91 (acyl-thioester intermediate) is an active-site residue. Catalysis depends on proton acceptor residues His-343 and Cys-373.

This sequence belongs to the thiolase-like superfamily. Thiolase family. In terms of assembly, heterotetramer of two alpha chains (FadB) and two beta chains (FadA).

The protein localises to the cytoplasm. The enzyme catalyses an acyl-CoA + acetyl-CoA = a 3-oxoacyl-CoA + CoA. The protein operates within lipid metabolism; fatty acid beta-oxidation. Its function is as follows. Catalyzes the final step of fatty acid oxidation in which acetyl-CoA is released and the CoA ester of a fatty acid two carbons shorter is formed. The chain is 3-ketoacyl-CoA thiolase from Escherichia coli O139:H28 (strain E24377A / ETEC).